We begin with the raw amino-acid sequence, 365 residues long: 5-hydroxytryptamine receptor 1E (365 aa).

Residues 1-22 (MNITNCTTDASMVVRPKTVTEK) are Extracellular-facing. N-linked (GlcNAc...) asparagine glycosylation is found at N2 and N5. The helical transmembrane segment at 23 to 47 (MLICMTLVIITTLTMLLNSAVIMAI) threads the bilayer. At 48–59 (CTTKKLHQPANY) the chain is on the cytoplasmic side. The helical transmembrane segment at 60 to 82 (LICSLAVTDLLVAVLVMPLSIMY) threads the bilayer. The Extracellular portion of the chain corresponds to 83–96 (IVMDSWRLGYFICE). Cysteines 95 and 173 form a disulfide. Residues 97–118 (VWLSVDMTCCTCSILHLCVIAL) traverse the membrane as a helical segment. Ergotamine-binding residues include D102 and T107. The short motif at 119-121 (DRY) is the DRY motif; important for ligand-induced conformation changes element. Residues 119-138 (DRYWAITNAIEYARKRTAKR) lie on the Cytoplasmic side of the membrane. A helical membrane pass occupies residues 139–160 (AGLMILTVWTISIFISMPPLFW). Residues 161–179 (RSHRQLSPPPSQCTIQHDH) lie on the Extracellular side of the membrane. An ergotamine-binding site is contributed by I175. A helical membrane pass occupies residues 180–202 (VIYTIYSTFGAFYIPLTLILILY). The Cytoplasmic segment spans residues 203 to 291 (YRIYHAAKSL…SSTRERKAAR (89 aa)). A helical membrane pass occupies residues 292-314 (ILGLILGAFILSWLPFFIKELIV). Residues 315–324 (GLSIYTVSSE) are Extracellular-facing. The chain crosses the membrane as a helical span at residues 325 to 347 (VGDFLTWLGYVNSLINPLLYTSF). Residues 340–344 (NPLLY) carry the NPxxY motif; important for ligand-induced conformation changes and signaling motif. Residues 348–365 (NEDFKLAFKKLIRCREHT) are Cytoplasmic-facing.

It belongs to the G-protein coupled receptor 1 family. As to expression, detected in the brain with the greatest abundance in the hippocampus, followed by the olfactory bulb. Lower levels are detected in the cortex, thalamus, pons, hypothalamus, midbrain, striatum, and cerebellum.

It is found in the cell membrane. In terms of biological role, G-protein coupled receptor for 5-hydroxytryptamine (serotonin). Also functions as a receptor for various alkaloids and psychoactive substances. Ligand binding causes a conformation change that triggers signaling via guanine nucleotide-binding proteins (G proteins) and modulates the activity of down-stream effectors, such as adenylate cyclase. Signaling inhibits adenylate cyclase activity. In Cavia porcellus (Guinea pig), this protein is 5-hydroxytryptamine receptor 1E (5HT1E).